A 466-amino-acid chain; its full sequence is Histidine--tRNA ligase (466 aa).

Belongs to the class-II aminoacyl-tRNA synthetase family. Homodimer.

It localises to the cytoplasm. It catalyses the reaction tRNA(His) + L-histidine + ATP = L-histidyl-tRNA(His) + AMP + diphosphate + H(+). This Xylella fastidiosa (strain M23) protein is Histidine--tRNA ligase.